A 116-amino-acid polypeptide reads, in one-letter code: S-adenosylmethionine decarboxylase proenzyme (116 aa).

The active-site Schiff-base intermediate with substrate; via pyruvic acid is S62. Position 62 is a pyruvic acid (Ser); by autocatalysis (S62). H67 serves as the catalytic Proton acceptor; for processing activity. C82 (proton donor; for catalytic activity) is an active-site residue.

This sequence belongs to the prokaryotic AdoMetDC family. Type 1 subfamily. In terms of assembly, heterotetramer of two alpha and two beta chains arranged as a dimer of alpha/beta heterodimers. The cofactor is pyruvate. In terms of processing, is synthesized initially as an inactive proenzyme. Formation of the active enzyme involves a self-maturation process in which the active site pyruvoyl group is generated from an internal serine residue via an autocatalytic post-translational modification. Two non-identical subunits are generated from the proenzyme in this reaction, and the pyruvate is formed at the N-terminus of the alpha chain, which is derived from the carboxyl end of the proenzyme. The post-translation cleavage follows an unusual pathway, termed non-hydrolytic serinolysis, in which the side chain hydroxyl group of the serine supplies its oxygen atom to form the C-terminus of the beta chain, while the remainder of the serine residue undergoes an oxidative deamination to produce ammonia and the pyruvoyl group blocking the N-terminus of the alpha chain.

It catalyses the reaction S-adenosyl-L-methionine + H(+) = S-adenosyl 3-(methylsulfanyl)propylamine + CO2. It participates in amine and polyamine biosynthesis; S-adenosylmethioninamine biosynthesis; S-adenosylmethioninamine from S-adenosyl-L-methionine: step 1/1. Its function is as follows. Catalyzes the decarboxylation of S-adenosylmethionine to S-adenosylmethioninamine (dcAdoMet), the propylamine donor required for the synthesis of the polyamines spermine and spermidine from the diamine putrescine. The polypeptide is S-adenosylmethionine decarboxylase proenzyme (Thermomicrobium roseum (strain ATCC 27502 / DSM 5159 / P-2)).